A 118-amino-acid chain; its full sequence is Basic phospholipase A2 CM-II (118 aa).

7 cysteine pairs are disulfide-bonded: C11–C70, C26–C117, C28–C44, C43–C98, C50–C91, C59–C84, and C77–C89. Ca(2+) is bound by residues Y27, G29, and G31. H47 is a catalytic residue. D48 is a Ca(2+) binding site. D92 is a catalytic residue.

Belongs to the phospholipase A2 family. Group I subfamily. D49 sub-subfamily. Ca(2+) is required as a cofactor. In terms of tissue distribution, expressed by the venom gland.

It localises to the secreted. It carries out the reaction a 1,2-diacyl-sn-glycero-3-phosphocholine + H2O = a 1-acyl-sn-glycero-3-phosphocholine + a fatty acid + H(+). In terms of biological role, snake venom phospholipase A2 (PLA2) that causes myonecrosis when injected intramuscularly, causes neuromuscular blockade with a gradual contracture and a decreased sensitivity to ACh and KCl (in the chick biventer cervicis nerve-muscle preparation), abolishes twitches evoked by indirect stimulation earlier than those by direct stimulation (in the mouse phrenic nerve-diaphragm preparation), shows indirect hemolytic activity, and shows weak anticoagulant activity. PLA2 catalyzes the calcium-dependent hydrolysis of the 2-acyl groups in 3-sn-phosphoglycerides. This is Basic phospholipase A2 CM-II from Naja mossambica (Mozambique spitting cobra).